A 215-amino-acid polypeptide reads, in one-letter code: Adenylate kinase (215 aa).

10–15 is a binding site for ATP; sequence GAGKGT. The segment at 30 to 59 is NMP; the sequence is STGDMLRAAVKAETELGLKAKSVMDSGGLV. AMP is bound by residues Thr31, Arg36, 57–59, 85–88, and Gln92; these read GLV and GFPR. Positions 122–159 are LID; that stretch reads GRRVHEGSGRIYHTIFNPPKVECIDDVTGEPLLQRKDD. Residues Arg123 and 132-133 contribute to the ATP site; that span reads IY. Residues Arg156 and Arg167 each contribute to the AMP site. An ATP-binding site is contributed by Gly201.

It belongs to the adenylate kinase family. In terms of assembly, monomer.

The protein resides in the cytoplasm. It carries out the reaction AMP + ATP = 2 ADP. Its pathway is purine metabolism; AMP biosynthesis via salvage pathway; AMP from ADP: step 1/1. In terms of biological role, catalyzes the reversible transfer of the terminal phosphate group between ATP and AMP. Plays an important role in cellular energy homeostasis and in adenine nucleotide metabolism. The chain is Adenylate kinase from Pseudomonas savastanoi pv. phaseolicola (strain 1448A / Race 6) (Pseudomonas syringae pv. phaseolicola (strain 1448A / Race 6)).